The following is a 156-amino-acid chain: Ecotin (156 aa).

The first 19 residues, Met-1–Ala-19, serve as a signal peptide directing secretion. An intrachain disulfide couples Cys-65 to Cys-102.

It belongs to the protease inhibitor I11 (ecotin) family. In terms of assembly, homodimer.

It is found in the periplasm. General inhibitor of family S1 serine proteases. The chain is Ecotin from Pseudomonas aeruginosa (strain ATCC 15692 / DSM 22644 / CIP 104116 / JCM 14847 / LMG 12228 / 1C / PRS 101 / PAO1).